An 800-amino-acid polypeptide reads, in one-letter code: Protein translocase subunit SecA (800 aa).

ATP is bound by residues glutamine 85, 103 to 107 (GEGKT), and aspartate 504.

The protein belongs to the SecA family. In terms of assembly, monomer and homodimer. Part of the essential Sec protein translocation apparatus which comprises SecA, SecYEG and auxiliary proteins SecDF. Other proteins may also be involved.

The protein resides in the cell membrane. The protein localises to the cytoplasm. The catalysed reaction is ATP + H2O + cellular proteinSide 1 = ADP + phosphate + cellular proteinSide 2.. In terms of biological role, part of the Sec protein translocase complex. Interacts with the SecYEG preprotein conducting channel. Has a central role in coupling the hydrolysis of ATP to the transfer of proteins into and across the cell membrane, serving as an ATP-driven molecular motor driving the stepwise translocation of polypeptide chains across the membrane. This Lactobacillus delbrueckii subsp. bulgaricus (strain ATCC 11842 / DSM 20081 / BCRC 10696 / JCM 1002 / NBRC 13953 / NCIMB 11778 / NCTC 12712 / WDCM 00102 / Lb 14) protein is Protein translocase subunit SecA.